The following is a 126-amino-acid chain: Fluoride-specific ion channel FluC 1 (126 aa).

A run of 4 helical transmembrane segments spans residues 1-21 (MAGSALEALLVGIGAIPGAWL), 38-58 (WGTFAVNVIACFGLGLVLALY), 67-87 (LALLIGVGFFGSLSTFSTFAV), and 99-119 (FVSLVLALASIAAGLCAAGVG). Na(+) contacts are provided by Gly-77 and Ser-80.

This sequence belongs to the fluoride channel Fluc/FEX (TC 1.A.43) family.

It localises to the cell inner membrane. The catalysed reaction is fluoride(in) = fluoride(out). With respect to regulation, na(+) is not transported, but it plays an essential structural role and its presence is essential for fluoride channel function. Fluoride-specific ion channel. Important for reducing fluoride concentration in the cell, thus reducing its toxicity. This Synechococcus sp. (strain CC9902) protein is Fluoride-specific ion channel FluC 1.